Here is an 86-residue protein sequence, read N- to C-terminus: Putative membrane protein insertion efficiency factor (86 aa).

Belongs to the UPF0161 family.

The protein localises to the cell inner membrane. In terms of biological role, could be involved in insertion of integral membrane proteins into the membrane. In Cellvibrio japonicus (strain Ueda107) (Pseudomonas fluorescens subsp. cellulosa), this protein is Putative membrane protein insertion efficiency factor.